A 121-amino-acid chain; its full sequence is Alpha-endosulfine (121 aa).

Positions Met-1–Phe-53 are disordered. An N-acetylserine modification is found at Ser-2. Residue Ser-2 is modified to Phosphoserine. Residues Glu-16–Leu-37 show a composition bias toward basic and acidic residues. Thr-21 carries the post-translational modification Phosphothreonine. The residue at position 43 (Ser-43) is a Phosphoserine. At Ser-67 the chain carries Phosphoserine; by GWL. The segment at Asn-79–Glu-121 is disordered. Ser-109 is subject to Phosphoserine; by PKA.

The protein belongs to the endosulfine family. Interacts (when phosphorylated at Ser-67) with PPP2R2D. Interacts with ABCC8. Interacts with SNCA; interaction is disrupted when phosphorylated at Ser-109. Phosphorylation at Ser-67 by GWL during mitosis is essential for interaction with PPP2R2D (PR55-delta) and subsequent inactivation of PP2A. Phosphorylated by PKA. In terms of tissue distribution, widely expressed with high levels in skeletal muscle and brain and lower levels in the pancreas.

The protein resides in the cytoplasm. Protein phosphatase inhibitor that specifically inhibits protein phosphatase 2A (PP2A) during mitosis. When phosphorylated at Ser-67 during mitosis, specifically interacts with PPP2R2D (PR55-delta) and inhibits its activity, leading to inactivation of PP2A, an essential condition to keep cyclin-B1-CDK1 activity high during M phase. Also acts as a stimulator of insulin secretion by interacting with sulfonylurea receptor (ABCC8), thereby preventing sulfonylurea from binding to its receptor and reducing K(ATP) channel currents. This Homo sapiens (Human) protein is Alpha-endosulfine (ENSA).